The sequence spans 179 residues: Ribosome maturation factor RimM (179 aa).

The 72-residue stretch at 102–173 (PEEYHYRDLI…ALHVQPPPGL (72 aa)) folds into the PRC barrel domain.

The protein belongs to the RimM family. Binds ribosomal protein uS19.

The protein localises to the cytoplasm. In terms of biological role, an accessory protein needed during the final step in the assembly of 30S ribosomal subunit, possibly for assembly of the head region. Essential for efficient processing of 16S rRNA. May be needed both before and after RbfA during the maturation of 16S rRNA. It has affinity for free ribosomal 30S subunits but not for 70S ribosomes. The sequence is that of Ribosome maturation factor RimM from Synechococcus sp. (strain JA-2-3B'a(2-13)) (Cyanobacteria bacterium Yellowstone B-Prime).